A 566-amino-acid polypeptide reads, in one-letter code: ATP-dependent RNA helicase DBP3 (566 aa).

The disordered stretch occupies residues 1 to 139; it reads MSAGKKHARD…TTPNGSAQRN (139 aa). The segment covering 39-58 has biased composition (basic residues); it reads DKKKKDKKDKKERKEKKEKK. The span at 81-91 shows a compositional bias: basic and acidic residues; the sequence is SEPKPEKEKKE. Residues 92 to 102 are compositionally biased toward basic residues; sequence KNNKKDKKDKK. The segment covering 127 to 139 has biased composition (polar residues); it reads AATTTPNGSAQRN. The Q motif signature appears at 182–209; that stretch reads IHFSHLPTSTLTSKKPFASFTAPTPIQA. Residues 212–396 enclose the Helicase ATP-binding domain; sequence WPFALSGRDV…EGFMIDPVKA (185 aa). 225–232 contacts ATP; that stretch reads AETGSGKT. A DEAD box motif is present at residues 342–345; the sequence is DEAD. The 134-residue stretch at 433–566 folds into the Helicase C-terminal domain; the sequence is GKEQRLLELL…TEHDKSHSGS (134 aa).

The protein belongs to the DEAD box helicase family. DDX5/DBP2 subfamily.

It localises to the nucleus. It is found in the nucleolus. It catalyses the reaction ATP + H2O = ADP + phosphate + H(+). In terms of biological role, ATP-dependent RNA helicase required for 60S ribosomal subunit synthesis. Involved in efficient pre-rRNA processing, predominantly at site A3, which is necessary for the normal formation of 25S and 5.8S rRNAs. The protein is ATP-dependent RNA helicase DBP3 (DBP3) of Chaetomium globosum (strain ATCC 6205 / CBS 148.51 / DSM 1962 / NBRC 6347 / NRRL 1970) (Soil fungus).